The sequence spans 55 residues: Mitochondrial import receptor subunit TOM7 homolog (55 aa).

Residues M1–Q20 are Cytoplasmic-facing. Residues F21–F36 form a helical membrane-spanning segment. At K37–G55 the chain is on the mitochondrial intermembrane side.

It belongs to the Tom7 family. Forms part of the preprotein translocase complex of the outer mitochondrial membrane (TOM complex) which consists of at least 7 different proteins (TOMM5, TOMM6, TOMM7, TOMM20, TOMM22, TOMM40 and TOMM70).

It is found in the mitochondrion outer membrane. Functionally, required for assembly and stability of the TOM complex. Positive regulator of PRKN translocation to damaged mitochondria. Acts probably by stabilizing PINK1 on the outer membrane of depolarized mitochondria. The protein is Mitochondrial import receptor subunit TOM7 homolog (TOMM7) of Bos taurus (Bovine).